Consider the following 293-residue polypeptide: ATP synthase gamma chain (293 aa).

Belongs to the ATPase gamma chain family. In terms of assembly, F-type ATPases have 2 components, CF(1) - the catalytic core - and CF(0) - the membrane proton channel. CF(1) has five subunits: alpha(3), beta(3), gamma(1), delta(1), epsilon(1). CF(0) has three main subunits: a, b and c.

It localises to the cell membrane. In terms of biological role, produces ATP from ADP in the presence of a proton gradient across the membrane. The gamma chain is believed to be important in regulating ATPase activity and the flow of protons through the CF(0) complex. The sequence is that of ATP synthase gamma chain from Methylacidiphilum infernorum (isolate V4) (Methylokorus infernorum (strain V4)).